The chain runs to 650 residues: DNA gyrase subunit B (650 aa).

The Toprim domain maps to 429-543 (NELFIVEGDS…AGYVYIAQPP (115 aa)). Residues Glu435, Asp508, and Asp510 each coordinate Mg(2+).

This sequence belongs to the type II topoisomerase GyrB family. In terms of assembly, heterotetramer, composed of two GyrA and two GyrB chains. In the heterotetramer, GyrA contains the active site tyrosine that forms a transient covalent intermediate with DNA, while GyrB binds cofactors and catalyzes ATP hydrolysis. It depends on Mg(2+) as a cofactor. Mn(2+) is required as a cofactor. Ca(2+) serves as cofactor.

The protein resides in the cytoplasm. The catalysed reaction is ATP-dependent breakage, passage and rejoining of double-stranded DNA.. Its function is as follows. A type II topoisomerase that negatively supercoils closed circular double-stranded (ds) DNA in an ATP-dependent manner to modulate DNA topology and maintain chromosomes in an underwound state. Negative supercoiling favors strand separation, and DNA replication, transcription, recombination and repair, all of which involve strand separation. Also able to catalyze the interconversion of other topological isomers of dsDNA rings, including catenanes and knotted rings. Type II topoisomerases break and join 2 DNA strands simultaneously in an ATP-dependent manner. This Streptococcus pyogenes serotype M1 protein is DNA gyrase subunit B.